A 334-amino-acid chain; its full sequence is GTP 3',8-cyclase (334 aa).

One can recognise a Radical SAM core domain in the interval 11-236; sequence GFNRKIDYLR…ESTESSQGPA (226 aa). GTP is bound at residue Arg-20. Positions 27 and 31 each coordinate [4Fe-4S] cluster. Tyr-33 lines the S-adenosyl-L-methionine pocket. Cys-34 is a [4Fe-4S] cluster binding site. Position 69 (Arg-69) interacts with GTP. An S-adenosyl-L-methionine-binding site is contributed by Gly-73. Thr-100 contributes to the GTP binding site. Ser-124 is a binding site for S-adenosyl-L-methionine. Lys-161 lines the GTP pocket. Met-195 contributes to the S-adenosyl-L-methionine binding site. The [4Fe-4S] cluster site is built by Cys-260 and Cys-263. Residue 265–267 coordinates GTP; that stretch reads RVR. Cys-277 contributes to the [4Fe-4S] cluster binding site.

This sequence belongs to the radical SAM superfamily. MoaA family. In terms of assembly, monomer and homodimer. Requires [4Fe-4S] cluster as cofactor.

The catalysed reaction is GTP + AH2 + S-adenosyl-L-methionine = (8S)-3',8-cyclo-7,8-dihydroguanosine 5'-triphosphate + 5'-deoxyadenosine + L-methionine + A + H(+). The protein operates within cofactor biosynthesis; molybdopterin biosynthesis. In terms of biological role, catalyzes the cyclization of GTP to (8S)-3',8-cyclo-7,8-dihydroguanosine 5'-triphosphate. In Pseudomonas putida (strain W619), this protein is GTP 3',8-cyclase.